The chain runs to 503 residues: ATP synthase subunit alpha (503 aa).

Residue 170-177 coordinates ATP; sequence GDRKTGKT.

The protein belongs to the ATPase alpha/beta chains family. In terms of assembly, F-type ATPases have 2 components, CF(1) - the catalytic core - and CF(0) - the membrane proton channel. CF(1) has five subunits: alpha(3), beta(3), gamma(1), delta(1), epsilon(1). CF(0) has four main subunits: a, b, b' and c.

It localises to the cellular thylakoid membrane. It carries out the reaction ATP + H2O + 4 H(+)(in) = ADP + phosphate + 5 H(+)(out). Its function is as follows. Produces ATP from ADP in the presence of a proton gradient across the membrane. The alpha chain is a regulatory subunit. This chain is ATP synthase subunit alpha, found in Rippkaea orientalis (strain PCC 8801 / RF-1) (Cyanothece sp. (strain PCC 8801)).